Reading from the N-terminus, the 189-residue chain is Riboflavin transporter RibU (189 aa).

Residues 1–9 lie on the Cytoplasmic side of the membrane; the sequence is MNGRRKLNM. A helical transmembrane segment spans residues 10-29; the sequence is QQNKRLITISMLSAIAFVLT. Topologically, residues 30-44 are periplasmic; that stretch reads FIKFPIPFLPPYLTL. The helical intramembrane region spans 45 to 56; sequence DFSDVPSLLATF. Residues 57–58 lie on the Cytoplasmic side of the membrane; sequence TF. A helical transmembrane segment spans residues 59–78; sequence GPVAGIIVALVKNLLNYLFS. Topologically, residues 79-82 are periplasmic; that stretch reads MGDP. Residues 83–104 form a helical membrane-spanning segment; that stretch reads VGPFANFLAGASFLLTAYAIYK. Over 105–107 the chain is Cytoplasmic; it reads NKR. The helical transmembrane segment at 108-132 threads the bilayer; the sequence is STKSLITGLIIATIVMTIVLSILNY. The Periplasmic portion of the chain corresponds to 133–159; the sequence is FVLLPLYGMIFNLADIANNLKVIIVSG. A helical membrane pass occupies residues 160–182; sequence IIPFNIIKGIVISIVFILLYRRL. Residues 183–189 lie on the Cytoplasmic side of the membrane; the sequence is ANFLKRI.

Belongs to the prokaryotic riboflavin transporter (P-RFT) (TC 2.A.87) family. In terms of assembly, forms a stable energy-coupling factor (ECF) transporter complex composed of a membrane-embedded substrate-binding protein (S component), 2 ATP-binding proteins (A component) and 2 transmembrane proteins (T component). May be able to interact with more than 1 S component at a time.

It is found in the cell membrane. Mediates riboflavin uptake, may also transport FMN and roseoflavin. Probably a riboflavin-binding protein that interacts with the energy-coupling factor (ECF) ABC-transporter complex. Unlike classic ABC transporters this ECF transporter provides the energy necessary to transport a number of different substrates. The substrates themselves are bound by transmembrane, not extracytoplasmic soluble proteins. In Staphylococcus aureus (strain TCH60), this protein is Riboflavin transporter RibU (ribU).